A 492-amino-acid chain; its full sequence is Putative BTB/POZ domain and WD-repeat protein R786 (492 aa).

In terms of domain architecture, BTB spans 16 to 86 (TDVEIVLIDE…FYGQIVDSTN (71 aa)). 2 WD repeats span residues 241 to 281 (QSSC…IKIK) and 286 to 325 (LINR…SKGI).

The protein belongs to the mimivirus BTB/WD family.

The polypeptide is Putative BTB/POZ domain and WD-repeat protein R786 (Acanthamoeba polyphaga (Amoeba)).